Consider the following 307-residue polypeptide: D-alanine--D-alanine ligase (307 aa).

Positions 101 to 301 (KDVLRAAGVP…FGELVRWMVE (201 aa)) constitute an ATP-grasp domain. Position 128-182 (128-182 (MTPPYVVKPLGEGSSFGVIIVRADQTHPPQELTRDDWAYGDLVLVERFVAGRELT)) interacts with ATP. Residues Asp251, Glu268, and Asn270 each contribute to the Mg(2+) site.

The protein belongs to the D-alanine--D-alanine ligase family. The cofactor is Mg(2+). It depends on Mn(2+) as a cofactor.

The protein resides in the cytoplasm. It catalyses the reaction 2 D-alanine + ATP = D-alanyl-D-alanine + ADP + phosphate + H(+). It functions in the pathway cell wall biogenesis; peptidoglycan biosynthesis. Its function is as follows. Cell wall formation. The chain is D-alanine--D-alanine ligase from Methylocella silvestris (strain DSM 15510 / CIP 108128 / LMG 27833 / NCIMB 13906 / BL2).